We begin with the raw amino-acid sequence, 104 residues long: UPF0235 protein MTH_637 (104 aa).

The protein belongs to the UPF0235 family.

The chain is UPF0235 protein MTH_637 from Methanothermobacter thermautotrophicus (strain ATCC 29096 / DSM 1053 / JCM 10044 / NBRC 100330 / Delta H) (Methanobacterium thermoautotrophicum).